A 160-amino-acid polypeptide reads, in one-letter code: SsrA-binding protein (160 aa).

The segment at 136 to 160 (KRDTVRERDSNRELQRAVRNKGKED) is disordered.

This sequence belongs to the SmpB family.

Its subcellular location is the cytoplasm. Required for rescue of stalled ribosomes mediated by trans-translation. Binds to transfer-messenger RNA (tmRNA), required for stable association of tmRNA with ribosomes. tmRNA and SmpB together mimic tRNA shape, replacing the anticodon stem-loop with SmpB. tmRNA is encoded by the ssrA gene; the 2 termini fold to resemble tRNA(Ala) and it encodes a 'tag peptide', a short internal open reading frame. During trans-translation Ala-aminoacylated tmRNA acts like a tRNA, entering the A-site of stalled ribosomes, displacing the stalled mRNA. The ribosome then switches to translate the ORF on the tmRNA; the nascent peptide is terminated with the 'tag peptide' encoded by the tmRNA and targeted for degradation. The ribosome is freed to recommence translation, which seems to be the essential function of trans-translation. The sequence is that of SsrA-binding protein from Pseudomonas putida (strain W619).